Consider the following 386-residue polypeptide: DNase toxin Tse7 (386 aa).

As to quaternary structure, interacts with Tsi7.

The enzyme catalyses Endonucleolytic cleavage to 5'-phosphodinucleotide and 5'-phosphooligonucleotide end-products.. Its function is as follows. Type VI secretion exported toxin that via to its DNase activity induces growth arrest and ultimately DNA degradation within target cell. The activity is initially neutralized by a cognate immunity protein Tsi7. This Pseudomonas aeruginosa (strain ATCC 15692 / DSM 22644 / CIP 104116 / JCM 14847 / LMG 12228 / 1C / PRS 101 / PAO1) protein is DNase toxin Tse7.